Reading from the N-terminus, the 506-residue chain is 5'-3' exonuclease PLD4 (506 aa).

Residues 31–51 traverse the membrane as a helical segment; sequence LQVLGALAVLWLGSVALICLL. Cys94 and Cys250 form a disulfide bridge. 2 N-linked (GlcNAc...) asparagine glycosylation sites follow: Asn150 and Asn171. The PLD phosphodiesterase 1 domain occupies 209 to 236; sequence TRGVLHSKFWVVDGRHIYMGSANMDWRS. Residue His214 is the Proton donor of the active site. Residues Lys216 and Asp221 contribute to the active site. N-linked (GlcNAc...) asparagine glycosylation is found at Asn249, Asn281, Asn403, Asn417, and Asn427. A disulfide bridge connects residues Cys379 and Cys502. The PLD phosphodiesterase 2 domain occupies 423–449; sequence FSRVNHSKFMVTEKAAYIGTSNWSEDY. The Nucleophile role is filled by His428. Asn444 is a glycosylation site (N-linked (GlcNAc...) asparagine).

Belongs to the phospholipase D family. Homodimer. Highly N-glycosylated. In terms of tissue distribution, expressed in plasmacytoid dendritic cells and monocytes (at protein level).

The protein resides in the endoplasmic reticulum membrane. Its subcellular location is the golgi apparatus. It localises to the trans-Golgi network membrane. The protein localises to the nucleus. It is found in the early endosome. The protein resides in the cytoplasmic vesicle. Its subcellular location is the phagosome. It localises to the lysosome. The enzyme catalyses Exonucleolytic cleavage in the 5'- to 3'-direction to yield nucleoside 3'-phosphates.. It carries out the reaction a 5'-end 5'-dephospho-ribonucleotidyl-ribonucleotide-RNA + H2O = a ribonucleoside 3'-phosphate + a 5'-end dephospho-ribonucleoside-RNA + H(+). The catalysed reaction is a ribonucleoside 3'-phosphate-2'-3'-cyclophospho-GMP + H2O = a ribonucleoside 3'-phosphate + 2',3'-cyclophospho-GMP + H(+). It catalyses the reaction a 5'-end 5'-dephospho-2'-deoxyribonucleotidyl-2'-deoxyribonucleotide in single-stranded DNA + H2O = a 5'-end dephospho-2'-deoxyribonucleoside in single-stranded DNA + a 2'-deoxyribonucleoside 3'-phosphate + H(+). The enzyme catalyses a 5'-end 5'-phospho-2'-deoxyribonucleotide in single-stranded DNA + H2O = a 5'-end 5'-dephospho-2'-deoxyribonucleotide in single-stranded DNA + phosphate. It carries out the reaction a 3-lyso-sn-glycero-1-phospho-(3'-acyl-1'-sn-glycerol) + a 1-acyl-sn-glycerol = a 3-acyl-sn-glycero-1-phospho-(3'-acyl-1'-sn-glycerol) + glycerol. The catalysed reaction is 3-lyso-sn-glycero-1-phospho-(3'-(9Z-octadecenoyl)-1'-sn-glycerol) + 1-(9Z-octadecenoyl)-sn-glycerol = 3-(9Z-octadecenoyl)-sn-glycero-1-phospho-(3'-(9Z-octadecenoyl)-1'-sn-glycerol) + glycerol. With respect to regulation, the exonuclease activity toward ssDNA substrate is Ca(2+) and Mg(2+)-independent, but it is inhibited by Fe(2+), Cu(2+) and to a lesser extent Zn(2+) ions. In terms of biological role, 5'-&gt;3' exonuclease that hydrolyzes the phosphodiester bond of single-stranded DNA (ssDNA) and RNA molecules to form nucleoside 3'-monophosphates and 5'-end 5'-hydroxy deoxyribonucleotide/ribonucleotide fragments. Partially redundant with PLD3, can cleave all four nucleotides displaying higher efficiency for ssDNA and RNA fragments initiated with uridine and guanosine residues and lower efficiency for cytidine-initiated substrates. As a result, it does not always degrade polynucleotides to the single nucleotide level, it can stall at specific sites sparing certain fragments from exonucleolytic degradation. Processes self and pathogenic ssDNA and RNA molecules that reach the endolysosomal compartment via phagocytosis or autophagy and may serve as 'danger' signals for recognition by innate immune receptors such as toll-like receptors (TLRs). Degrades mitochondrial CpG-rich ssDNA fragments to prevent TLR9 activation and autoinflammatory response, but it can cleave viral RNA to generate ligands for TLR7 activation and initiate antiviral immune responses. In plasmacytoid dendritic cells, it cooperates with endonuclease RNASET2 to release 2',3'-cyclic guanosine monophosphate (2',3'-cGMP), a potent stimulatory ligand for TLR7. Produces 2',3'-cGMPs and cytidine-rich RNA fragments that occupy TLR7 ligand-binding pockets and trigger a signaling-competent state. Can exert polynucleotide phosphatase activity toward 5'-phosphorylated ssDNA substrates although at a slow rate. Transphosphatidylase that catalyzes the exchange with R to S stereo-inversion of the glycerol moiety between (S,R)-lysophosphatidylglycerol (LPG) and monoacylglycerol (MAG) substrates to yield (S,S)-bis(monoacylglycero)phosphate (BMP). Can synthesize a variety of (S,S)-BMPs representing the main phospholipid constituent of lysosomal intralumenal vesicle (ILV) membranes that bind acid hydrolases for lipid degradation. Regulates the homeostasis and interorganellar communication of the endolysosomal system with an overall impact on cellular removal of dysfunctional organelles via autophagy as well as proper protein and lipid turnover. May play a role in myotube formation in response to ER stress. This chain is 5'-3' exonuclease PLD4, found in Homo sapiens (Human).